Consider the following 40-residue polypeptide: uncharacterized protein (40 aa).

This is an uncharacterized protein from Streptomyces peucetius.